A 515-amino-acid chain; its full sequence is ADP,ATP carrier protein 1 (515 aa).

The next 12 membrane-spanning stretches (helical) occupy residues 24–44, 62–82, 93–113, 124–144, 149–169, 184–204, 226–246, 286–306, 329–349, 358–378, 383–403, and 465–485; these read LKKV…YTVL, AIPF…MLIY, ALFY…PTVI, EFAD…VAIL, FAAF…LMFW, FYAL…RAIV, LLMA…WWIN, YILL…LIEV, FSFW…GNVI, ALVT…LVIF, SGLV…VGAI, and IGAM…IWLV.

It belongs to the ADP/ATP translocase tlc family.

The protein resides in the cell membrane. In Chlamydia pneumoniae (Chlamydophila pneumoniae), this protein is ADP,ATP carrier protein 1 (tlcA).